The chain runs to 401 residues: Subtilisin-like protease 10 (401 aa).

A signal peptide spans 1 to 19; the sequence is MLFLKAVIAILSVLPAADA. The propeptide occupies 20–116; it reads AAILNFENKQ…IEPDRMASAQ (97 aa). Positions 35 to 112 constitute an Inhibitor I9 domain; sequence SYIVVLKNDI…QVDYIEPDRM (78 aa). In terms of domain architecture, Peptidase S8 spans 126–401; that stretch reads SWGLGRISHQ…NRLLYNGSGQ (276 aa). Active-site charge relay system residues include Asp-158 and His-189. N-linked (GlcNAc...) asparagine glycosylation occurs at Asn-250. Ser-347 (charge relay system) is an active-site residue. A glycan (N-linked (GlcNAc...) asparagine) is linked at Asn-397.

This sequence belongs to the peptidase S8 family.

It is found in the secreted. Its function is as follows. Secreted subtilisin-like serine protease with keratinolytic activity that contributes to pathogenicity. The polypeptide is Subtilisin-like protease 10 (SUB10) (Arthroderma otae (strain ATCC MYA-4605 / CBS 113480) (Microsporum canis)).